Here is a 313-residue protein sequence, read N- to C-terminus: Ribosomal RNA small subunit methyltransferase H (313 aa).

S-adenosyl-L-methionine is bound by residues 31-33 (GGH), Asp-51, Phe-77, Asp-95, and Gln-102.

It belongs to the methyltransferase superfamily. RsmH family.

The protein localises to the cytoplasm. The catalysed reaction is cytidine(1402) in 16S rRNA + S-adenosyl-L-methionine = N(4)-methylcytidine(1402) in 16S rRNA + S-adenosyl-L-homocysteine + H(+). Functionally, specifically methylates the N4 position of cytidine in position 1402 (C1402) of 16S rRNA. This is Ribosomal RNA small subunit methyltransferase H from Xylella fastidiosa (strain M12).